We begin with the raw amino-acid sequence, 868 residues long: Leucine--tRNA ligase (868 aa).

The 'HIGH' region signature appears at 42–52 (PYPSGKLHMGH). The short motif at 627–631 (KMSKS) is the 'KMSKS' region element. Residue K630 participates in ATP binding.

It belongs to the class-I aminoacyl-tRNA synthetase family.

Its subcellular location is the cytoplasm. It catalyses the reaction tRNA(Leu) + L-leucine + ATP = L-leucyl-tRNA(Leu) + AMP + diphosphate. This chain is Leucine--tRNA ligase, found in Pseudomonas putida (strain ATCC 700007 / DSM 6899 / JCM 31910 / BCRC 17059 / LMG 24140 / F1).